The chain runs to 441 residues: ATP-dependent RNA helicase SUB2-1 (441 aa).

Residues 1–19 (MSHEGEEDLLEYSDNEQDI) show a composition bias toward acidic residues. The interval 1–46 (MSHEGEEDLLEYSDNEQDIQVDASKAAEPSELDATTAEDASNGDAE) is disordered. A Q motif motif is present at residues 57-85 (TGFKDFLLKPELARAIIDCGFEHPSEVQQ). In terms of domain architecture, Helicase ATP-binding spans 88 to 263 (IPQSIHGTDV…RRFLQNPLEI (176 aa)). 101 to 108 (AKSGLGKT) provides a ligand contact to ATP. The short motif at 210–213 (DECD) is the DECD box element. Positions 291 to 436 (KLAQLLDDLE…EFPEEGIDPS (146 aa)) constitute a Helicase C-terminal domain.

The protein belongs to the DEAD box helicase family. DECD subfamily.

The protein localises to the nucleus. The catalysed reaction is ATP + H2O = ADP + phosphate + H(+). Functionally, ATP-binding RNA helicase involved in transcription elongation and required for the export of mRNA out of the nucleus. SUB2 also plays a role in pre-mRNA splicing and spliceosome assembly. May be involved in rDNA and telomeric silencing, and maintenance of genome integrity. This Vanderwaltozyma polyspora (strain ATCC 22028 / DSM 70294 / BCRC 21397 / CBS 2163 / NBRC 10782 / NRRL Y-8283 / UCD 57-17) (Kluyveromyces polysporus) protein is ATP-dependent RNA helicase SUB2-1 (SUB2-1).